The following is a 390-amino-acid chain: Aspergillopepsin-1 (390 aa).

The first 19 residues, M1–A19, serve as a signal peptide directing secretion. The propeptide at A20–A67 is activation peptide. T70 carries O-linked (Man...) threonine glycosylation. One can recognise a Peptidase A1 domain in the interval Y84–A387. Catalysis depends on residues D100 and D281.

The protein belongs to the peptidase A1 family.

The protein localises to the secreted. The catalysed reaction is Hydrolysis of proteins with broad specificity. Generally favors hydrophobic residues in P1 and P1', but also accepts Lys in P1, which leads to activation of trypsinogen. Does not clot milk.. Inhibited by the microbial peptide pepstatin. Secreted aspartic endopeptidase that allows assimilation of proteinaceous substrates. The scissile peptide bond is attacked by a nucleophilic water molecule activated by two aspartic residues in the active site. Shows a broad primary substrate specificity. Favors hydrophobic residues at the P1 and P1' positions, but also accepts a lysine residue in the P1 position, leading to the activation of trypsinogen and chymotrypsinogen A. This is Aspergillopepsin-1 (pepA) from Aspergillus oryzae (Yellow koji mold).